A 214-amino-acid chain; its full sequence is Adenylate kinase (214 aa).

10–15 (GAGKGT) is a binding site for ATP. The interval 30-59 (STGDMLRAAVKAGTPLGLEAKKVMDAGQLV) is NMP. AMP is bound by residues threonine 31, arginine 36, 57 to 59 (QLV), 85 to 88 (GFPR), and glutamine 92. Positions 122-159 (GRRVHPGSGRVYHVVFNPPKVEGKDDVTGEDLVIRPDD) are LID. ATP is bound by residues arginine 123 and 132–133 (VY). AMP is bound by residues arginine 156 and arginine 167. Glutamine 200 is an ATP binding site.

The protein belongs to the adenylate kinase family. As to quaternary structure, monomer.

Its subcellular location is the cytoplasm. It catalyses the reaction AMP + ATP = 2 ADP. The protein operates within purine metabolism; AMP biosynthesis via salvage pathway; AMP from ADP: step 1/1. Catalyzes the reversible transfer of the terminal phosphate group between ATP and AMP. Plays an important role in cellular energy homeostasis and in adenine nucleotide metabolism. The polypeptide is Adenylate kinase (Shewanella amazonensis (strain ATCC BAA-1098 / SB2B)).